The primary structure comprises 238 residues: Ribonuclease PH (238 aa).

Phosphate contacts are provided by residues Arg86 and 124 to 126; that span reads GTR.

The protein belongs to the RNase PH family. As to quaternary structure, homohexameric ring arranged as a trimer of dimers.

The enzyme catalyses tRNA(n+1) + phosphate = tRNA(n) + a ribonucleoside 5'-diphosphate. In terms of biological role, phosphorolytic 3'-5' exoribonuclease that plays an important role in tRNA 3'-end maturation. Removes nucleotide residues following the 3'-CCA terminus of tRNAs; can also add nucleotides to the ends of RNA molecules by using nucleoside diphosphates as substrates, but this may not be physiologically important. Probably plays a role in initiation of 16S rRNA degradation (leading to ribosome degradation) during starvation. This chain is Ribonuclease PH, found in Solibacter usitatus (strain Ellin6076).